The following is a 220-amino-acid chain: Putative glutathione S-transferase C1183.02 (220 aa).

Residues 2 to 81 enclose the GST N-terminal domain; it reads FLGTLYSFKT…YFYEKGKHND (80 aa). The 128-residue stretch at 89 to 216 folds into the GST C-terminal domain; that stretch reads NEVEEAEMLK…FPLELPLTVT (128 aa).

This sequence belongs to the GST superfamily.

Its subcellular location is the cytoplasm. The catalysed reaction is RX + glutathione = an S-substituted glutathione + a halide anion + H(+). In terms of biological role, involved in the oxidative stress response and detoxification. This is Putative glutathione S-transferase C1183.02 from Schizosaccharomyces pombe (strain 972 / ATCC 24843) (Fission yeast).